A 141-amino-acid polypeptide reads, in one-letter code: Nucleoside diphosphate kinase (141 aa).

ATP-binding residues include K11, F59, R87, T93, R104, and N114. The Pros-phosphohistidine intermediate role is filled by H117.

Belongs to the NDK family. Homotetramer. Requires Mg(2+) as cofactor.

The protein resides in the cytoplasm. The enzyme catalyses a 2'-deoxyribonucleoside 5'-diphosphate + ATP = a 2'-deoxyribonucleoside 5'-triphosphate + ADP. The catalysed reaction is a ribonucleoside 5'-diphosphate + ATP = a ribonucleoside 5'-triphosphate + ADP. Functionally, major role in the synthesis of nucleoside triphosphates other than ATP. The ATP gamma phosphate is transferred to the NDP beta phosphate via a ping-pong mechanism, using a phosphorylated active-site intermediate. The sequence is that of Nucleoside diphosphate kinase from Azoarcus sp. (strain BH72).